The following is a 347-amino-acid chain: Probable 3-hydroxyisobutyrate dehydrogenase, mitochondrial (347 aa).

The transit peptide at 1-34 directs the protein to the mitochondrion; it reads MAIRRAQTLLCLSKFKTNFVSGSLHRFSSSSQNS. NAD(+)-binding positions include 38–67, 101–102, and threonine 134; these read QNVG…TVHD and LP. Lysine 219 is a catalytic residue. Lysine 294 contacts NAD(+).

Belongs to the HIBADH-related family. 3-hydroxyisobutyrate dehydrogenase subfamily.

Its subcellular location is the mitochondrion. It carries out the reaction 3-hydroxy-2-methylpropanoate + NAD(+) = 2-methyl-3-oxopropanoate + NADH + H(+). Its pathway is amino-acid degradation; L-valine degradation. In Arabidopsis thaliana (Mouse-ear cress), this protein is Probable 3-hydroxyisobutyrate dehydrogenase, mitochondrial.